We begin with the raw amino-acid sequence, 200 residues long: Phospholipase D (200 aa).

The signal sequence occupies residues 1 to 25; sequence MKRKNNKFIEISIAFILGIALGLYG. Residues 142–169 form the PLD phosphodiesterase domain; that stretch reads VPGIAHNKVIIIDKKKVITGSFNFTAAA. Active-site residues include histidine 147, lysine 149, and aspartate 154.

The protein belongs to the phospholipase D family. As to quaternary structure, homodimer.

The protein resides in the secreted. It carries out the reaction a 1,2-diacyl-sn-glycero-3-phosphocholine + H2O = a 1,2-diacyl-sn-glycero-3-phosphate + choline + H(+). Its function is as follows. Could be a virulence factor. This is Phospholipase D (pld) from Rickettsia conorii (strain ATCC VR-613 / Malish 7).